A 125-amino-acid polypeptide reads, in one-letter code: Small ribosomal subunit protein uS12 (125 aa).

Positions 1-31 are disordered; it reads MPTINQLVRHGRQTEVTKSKSPAMQGGPQRR. Position 89 is a 3-methylthioaspartic acid (Asp-89). The disordered stretch occupies residues 105-125; sequence QGVKDRKQSRSKYGAKRPKKA. Over residues 113–125 the composition is skewed to basic residues; the sequence is SRSKYGAKRPKKA.

The protein belongs to the universal ribosomal protein uS12 family. In terms of assembly, part of the 30S ribosomal subunit. Contacts proteins S8 and S17. May interact with IF1 in the 30S initiation complex.

Functionally, with S4 and S5 plays an important role in translational accuracy. Its function is as follows. Interacts with and stabilizes bases of the 16S rRNA that are involved in tRNA selection in the A site and with the mRNA backbone. Located at the interface of the 30S and 50S subunits, it traverses the body of the 30S subunit contacting proteins on the other side and probably holding the rRNA structure together. The combined cluster of proteins S8, S12 and S17 appears to hold together the shoulder and platform of the 30S subunit. The protein is Small ribosomal subunit protein uS12 of Methylibium petroleiphilum (strain ATCC BAA-1232 / LMG 22953 / PM1).